A 420-amino-acid chain; its full sequence is Ribosome biogenesis protein WDR12 homolog (420 aa).

Positions 10–92 (VQVHLKTKQE…EDAIEIEYVE (83 aa)) are ubiquitin-like (UBL) domain. WD repeat units follow at residues 104–142 (LHDD…LTIS), 143–185 (GHTA…NSVE), 192–231 (GHER…AVEG), 250–288 (GHRE…IKTE), 290–329 (STNK…GSVV), 335–375 (GHNA…APLY), and 379–417 (GHGE…ADDA).

The protein belongs to the WD repeat WDR12/YTM1 family.

The protein localises to the nucleus. It localises to the nucleolus. It is found in the nucleoplasm. In terms of biological role, required for maturation of ribosomal RNAs and formation of the large ribosomal subunit. This Drosophila yakuba (Fruit fly) protein is Ribosome biogenesis protein WDR12 homolog.